A 100-amino-acid chain; its full sequence is Omega-hexatoxin-Asp2a (100 aa).

The first 23 residues, 1-23 (MKFSKLSITLAVILTQAVFVLCG), serve as a signal peptide directing secretion. A propeptide spanning residues 24–55 (MKNEDFMEKGLESNELHDAIKKPVNSGKPDTE) is cleaved from the precursor. Disulfide bonds link Cys60/Cys73, Cys66/Cys79, and Cys72/Cys84.

This sequence belongs to the neurotoxin 15 family. 02 (omega-actx) subfamily. As to expression, expressed by the venom gland.

Its subcellular location is the secreted. In terms of biological role, potent inhibitor of insect, but not mammalian, voltage-gated calcium channels (Cav). The protein is Omega-hexatoxin-Asp2a of Atrax sp. (strain Illawarra) (Funnel-web spider).